The chain runs to 949 residues: MAM domain-containing glycosylphosphatidylinositol anchor protein 2 (949 aa).

The first 25 residues, 1-25, serve as a signal peptide directing secretion; that stretch reads MDLVYGLVWLLTVLLEGISGQGVYA. Ig-like domains are found at residues 27-127 and 134-232; these read PTVR…IRVD and PVVT…KMVS. 2 disulfide bridges follow: cysteine 62–cysteine 110 and cysteine 159–cysteine 216. N-linked (GlcNAc...) asparagine glycosylation is found at asparagine 92, asparagine 213, and asparagine 237. 4 consecutive Ig-like domains span residues 242–328, 340–436, 442–533, and 540–627; these read PSIK…NIIV, PDPY…VNIS, PNLT…ALVQ, and PAVE…FLVT. Disulfide bonds link cysteine 264/cysteine 310 and cysteine 359/cysteine 417. N-linked (GlcNAc...) asparagine glycosylation is found at asparagine 434, asparagine 443, asparagine 504, asparagine 610, and asparagine 703. 2 cysteine pairs are disulfide-bonded: cysteine 465–cysteine 515 and cysteine 561–cysteine 611. The region spanning 638-738 is the Fibronectin type-III domain; that stretch reads DTYNPVWQNR…TIRVIKYTGE (101 aa). An MAM domain is found at 739–914; it reads FHCGFEDGNI…VSIAEGECAK (176 aa). The GPI-anchor amidated aspartate moiety is linked to residue aspartate 924. Positions 925-949 are cleaved as a propeptide — removed in mature form; it reads GAVGILVHIWLFPVIILISILSPRR.

In terms of assembly, interacts (through the Ig-like domains) with NLGN2.

The protein resides in the cell membrane. May be involved in cell-cell interactions. The polypeptide is MAM domain-containing glycosylphosphatidylinositol anchor protein 2 (Mdga2) (Mus musculus (Mouse)).